A 1435-amino-acid chain; its full sequence is Cardiac-enriched FHL2-interacting protein (1435 aa).

Disordered regions lie at residues 109 to 176 (EEKY…PPKF), 203 to 234 (SNTHQNSYQPGRKHGEQESSKNPEMACHGSSS), 250 to 270 (FPSPHHKPVTGEPGRGKGTFL), and 291 to 311 (KDTAGTVPESKAPKHYGDTTL). The residue at position 120 (Thr-120) is a Phosphothreonine. Residues 133-147 (LRSSNKPVSKVSTLI) show a composition bias toward polar residues. Over residues 149–160 (SFDRTESQRCES) the composition is skewed to basic and acidic residues. Phosphoserine is present on Ser-323. Disordered stretches follow at residues 362-592 (EGKA…LTLS), 609-772 (AERS…EKEN), 795-847 (SQGE…SPSS), 1007-1108 (PEGD…ARVT), 1138-1261 (SPRG…PGGP), and 1363-1435 (QGPR…EGIS). Positions 389–402 (KGKESLQDTLEEKT) are enriched in basic and acidic residues. The residue at position 470 (Ser-470) is a Phosphoserine. Composition is skewed to basic and acidic residues over residues 479–493 (QEKEPSECQSRDSYK), 522–535 (VLDEKTRGKVDGKQ), 609–620 (AERSSYENKEVE), and 650–667 (CNRDPEPGGATEKMKTHQ). Polar residues predominate over residues 668–679 (LENGLSRSVSQE). The span at 727–741 (KFSTSSSDQSFASFD) shows a compositional bias: low complexity. A compositionally biased stretch (basic and acidic residues) spans 751–772 (NQREDRRKDVSAGDSQKDEKEN). Ser-816 is subject to Phosphoserine. The segment covering 831 to 847 (KGTTFSQAKDLTPSPSS) has biased composition (polar residues). Low complexity predominate over residues 1055 to 1066 (NSPNPGSPGESS). Residues 1067–1082 (ACSPAASNIWEESSQA) show a composition bias toward polar residues. Over residues 1083–1093 (PGGPELLPEEP) the composition is skewed to low complexity. Positions 1094 to 1105 (NQASPWASSSPA) are enriched in polar residues. Basic residues predominate over residues 1182–1193 (RRAKKLASKRRK). A compositionally biased stretch (basic and acidic residues) spans 1194 to 1211 (TDQAQEKHGESQEGKPCP). Positions 1424 to 1435 (DDLEDFATEGIS) are enriched in acidic residues.

In terms of assembly, interacts with FHL2. In terms of tissue distribution, expressed in the heart and skeletal muscle.

The protein resides in the cytoplasm. It localises to the myofibril. Its subcellular location is the sarcomere. It is found in the z line. Plays an important role in cardiomyocyte hypertrophy via activation of the calcineurin/NFAT signaling pathway. The chain is Cardiac-enriched FHL2-interacting protein from Homo sapiens (Human).